The primary structure comprises 240 residues: UDP-2,3-diacylglucosamine hydrolase (240 aa).

5 residues coordinate Mn(2+): Asp-8, His-10, Asp-41, Asn-79, and His-114. Asn-79 to Arg-80 is a substrate binding site. Substrate contacts are provided by Asp-122, Ser-160, Asn-164, Lys-167, and His-195. 2 residues coordinate Mn(2+): His-195 and His-197.

It belongs to the LpxH family. Requires Mn(2+) as cofactor.

It is found in the cell inner membrane. It catalyses the reaction UDP-2-N,3-O-bis[(3R)-3-hydroxytetradecanoyl]-alpha-D-glucosamine + H2O = 2-N,3-O-bis[(3R)-3-hydroxytetradecanoyl]-alpha-D-glucosaminyl 1-phosphate + UMP + 2 H(+). It participates in glycolipid biosynthesis; lipid IV(A) biosynthesis; lipid IV(A) from (3R)-3-hydroxytetradecanoyl-[acyl-carrier-protein] and UDP-N-acetyl-alpha-D-glucosamine: step 4/6. In terms of biological role, hydrolyzes the pyrophosphate bond of UDP-2,3-diacylglucosamine to yield 2,3-diacylglucosamine 1-phosphate (lipid X) and UMP by catalyzing the attack of water at the alpha-P atom. Involved in the biosynthesis of lipid A, a phosphorylated glycolipid that anchors the lipopolysaccharide to the outer membrane of the cell. This chain is UDP-2,3-diacylglucosamine hydrolase, found in Salmonella dublin (strain CT_02021853).